A 316-amino-acid polypeptide reads, in one-letter code: Transcription factor MafB (316 aa).

Disordered regions lie at residues 40 to 78 (PDRA…SPTE) and 116 to 204 (HQMP…EDRF). Low complexity predominate over residues 55–77 (SVSSTPISTPCSSVPSSPSFSPT). Composition is skewed to basic residues over residues 130–144 (GHHH…HQNH) and 160–172 (QHPH…HHHQ). A compositionally biased stretch (low complexity) spans 177 to 198 (PSGSSSSSQQLQNSHQQHQNSS). Residues 231–256 (RLKQKRRTLKNRGYAQSCRFKRVQQK) are basic motif. A bZIP domain is found at 231 to 294 (RLKQKRRTLK…DAYKIKCEKL (64 aa)). The segment at 259 to 280 (LENEKTQLIQQVEQLKLEVSRL) is leucine-zipper.

The protein belongs to the bZIP family. Maf subfamily. As to quaternary structure, homodimer or heterodimer with other bHLH-Zip transcription factors. Binds DNA as a homodimer or a heterodimer.

The protein localises to the nucleus. In terms of biological role, acts as a transcriptional activator or repressor. Implicated in the regulation of cell-type specific gene expression and play a role in inductive events during lens development. The protein is Transcription factor MafB (mafb) of Xenopus tropicalis (Western clawed frog).